Reading from the N-terminus, the 346-residue chain is Inner membrane protein YnjI (346 aa).

At 1 to 38 the chain is on the periplasmic side; that stretch reads MKKVLLQNHPGSEKYSFNGWEIFNSNFERMIKENKAML. A helical transmembrane segment spans residues 39 to 59; that stretch reads LCKWGFYLTCVVAVMFVFAAI. Residues 60 to 68 are Cytoplasmic-facing; that stretch reads TSNGLNERG. The chain crosses the membrane as a helical span at residues 69-89; sequence LITAGCSFLYLLIMMGLIVRA. The Periplasmic portion of the chain corresponds to 90–234; that stretch reads GFKAKKEQLH…DCANHSSGKS (145 aa). A helical transmembrane segment spans residues 235 to 255; sequence SAKLIWAAELSWMISISSTAF. The Cytoplasmic portion of the chain corresponds to 256–346; the sequence is QNGTIEEELA…PWGASSVKYS (91 aa).

It is found in the cell inner membrane. The sequence is that of Inner membrane protein YnjI (ynjI) from Escherichia coli (strain K12).